A 2622-amino-acid polypeptide reads, in one-letter code: Ankyrin-3 (2622 aa).

The segment at 1 to 44 (MAHAASQLKKNRDLEINAEEETEKKKKHRKRSRDRKKKSDANAS) is disordered. The span at 25–38 (KKKHRKRSRDRKKK) shows a compositional bias: basic residues. A Phosphoserine modification is found at serine 39. ANK repeat units follow at residues 73–102 (NGLN…NVDA), 106–135 (KGNT…NVNA), 139–168 (NGFT…SQSL), 172–201 (DGFT…KGKV), 203–230 (LPAL…NADI), 242–271 (SGFT…AVDF), 275–304 (NDIT…KIDA), 308–337 (DGLT…PILS), 341–370 (NGLS…PVDD), 374–403 (DYLT…NPNA), 407–436 (NGFT…SIQA), 440–469 (SGLT…SPNT), 473–502 (RGET…QVEA), 506–535 (DDQT…SPNA), 539–568 (SGYT…SLSI), 572–601 (KGFT…SPDA), 605–634 (SGLT…SPHA), 638–667 (NGYT…DANA), 671–700 (QGIA…NVNL), 704–733 (SGLT…HVDA), 737–766 (MGYT…KVNA), 770–799 (NGYT…SPNE), and 803–832 (NGNT…EIMT). Residue serine 631 is modified to Phosphoserine. A phosphoserine mark is found at valine 851, serine 855, serine 869, serine 875, serine 921, serine 924, serine 930, serine 965, serine 967, and serine 1121. Residues 868 to 889 (LSDGEYISDGEEGEDAITGDTD) form a disordered region. The span at 873–884 (YISDGEEGEDAI) shows a compositional bias: acidic residues. ZU5 domains lie at 992 to 1147 (FLVS…VVSR) and 1149 to 1296 (KQES…LADC). A phosphoserine mark is found at serine 1458 and serine 1469. The interval 1510–1539 (TPITVPGPAKSGSLSSSPSNTPSASPLKSI) is disordered. The span at 1515-1536 (PGPAKSGSLSSSPSNTPSASPL) shows a compositional bias: low complexity. Phosphoserine is present on residues serine 1621, serine 1624, serine 1679, serine 1984, serine 2102, serine 2114, and serine 2117. Disordered stretches follow at residues 1968-1992 (VESK…WTEF), 2099-2147 (ILES…FHEV), and 2292-2312 (SPDV…KDNQ). A compositionally biased stretch (basic and acidic residues) spans 1977–1986 (PKSDKGHSPE). A compositionally biased stretch (basic and acidic residues) spans 2106 to 2127 (FSQHDQDKSPLSDSGFETRSEK). Residues 2128–2137 (TPSAPQSAES) are compositionally biased toward polar residues. Residues 2336-2420 (TDIRMAIVAD…DIVTLLEGPI (85 aa)) form the Death domain. Phosphoserine is present on residues serine 2457, serine 2475, and serine 2544. Residues 2568–2622 (CVPVGMKKMTRTPADGKARLNLQEEEGSARSEPKQGEGYKVKTKKEIRNVEKKAH) form a disordered region. Residues 2594-2622 (GSARSEPKQGEGYKVKTKKEIRNVEKKAH) are compositionally biased toward basic and acidic residues.

May be a constituent of a NFASC/NRCAM/ankyrin G complex. Interacts with RHBG. Directly interacts with DMD and betaDAG1; this interaction does not interfere with DMD-binding and is required for DMD and betaDAG1 retention at costameres. Interacts (via N-terminal ANK repeats) with SCHIP1 isoform 7 (via C-terminus); this interaction is required for the localization at axon initial segments (AISs) and nodes of Ranvier (NRs). Interacts with PLEC and FLNC. Interacts (via ANK repeats) with IQCJ-SCHIP1; required for IQCJ-SCHIP1 localization at axon initial segments (AIS) and nodes of Ranvier. Interacts with SCHIP1. Interacts with KCNA1; this inhibits channel activity. Interacts with SCN5A. Interacts with PKP2 and GJA1/CX43. As to quaternary structure, interacts (via its C-terminal muscle-specific Obscurin/Titin-Binding-related domain sequence) with PLEC and FLNC. As to expression, expressed in the heart (at protein level). Expressed in skeletal muscle (at protein level). Expressed at highest levels in brain and testis, followed by skin, kidney, liver and spleen. In terms of tissue distribution, may be specifically expressed in muscle tissues, including heart and skeletal muscle (extensor digitorum longus) (at protein level). Expressed in skeletal muscle, brain, lung, heart, testes and kidney.

Its subcellular location is the cytoplasm. It is found in the cytoskeleton. It localises to the cell projection. The protein resides in the axon. The protein localises to the cell membrane. Its subcellular location is the sarcolemma. It is found in the postsynaptic cell membrane. It localises to the lysosome. The protein resides in the T-tubule. In terms of biological role, membrane-cytoskeleton linker. May participate in the maintenance/targeting of ion channels and cell adhesion molecules at the nodes of Ranvier and axonal initial segments. In skeletal muscle, required for costamere localization of DMD and betaDAG1. Regulates KCNA1 channel activity in function of dietary Mg(2+) levels, and thereby contributes to the regulation of renal Mg(2+) reabsorption. Required for intracellular adhesion and junctional conductance in myocytes, potentially via stabilization of GJA1/CX43 protein abundance and promotion of PKP2, GJA1/CX43, and SCN5A/Nav1.5 localization to cell-cell junctions. In Rattus norvegicus (Rat), this protein is Ankyrin-3 (Ank3).